The chain runs to 511 residues: uncharacterized protein (511 aa).

The LisH domain maps to 13 to 45 (IYDALNMLVYDYLLKMKYEGSAKIFFNEAGLEN). Residues 172 to 212 (PRFEEQGVPPAKMAPKQFRDEGRSGNVESPSIATNQEGSSP) are disordered. Over residues 197 to 210 (NVESPSIATNQEGS) the composition is skewed to polar residues.

This is an uncharacterized protein from Encephalitozoon cuniculi (strain GB-M1) (Microsporidian parasite).